The chain runs to 529 residues: Glycylpeptide N-tetradecanoyltransferase (529 aa).

A compositionally biased stretch (polar residues) spans 1 to 10 (MSEQEGNQSE). The disordered stretch occupies residues 1 to 65 (MSEQEGNQSE…ANPATKLTPS (65 aa)). The span at 11–23 (HQSEHVGESEGKL) shows a compositional bias: basic and acidic residues. A compositionally biased stretch (polar residues) spans 26-40 (ETPTTSQSTNASTGT). Residues 118 to 121 (FKFW), 252 to 254 (LCV), and 260 to 264 (SKRLT) each bind tetradecanoyl-CoA. The Proton acceptor; via carboxylate role is filled by Val529.

It belongs to the NMT family. In terms of assembly, monomer.

It is found in the cytoplasm. It carries out the reaction N-terminal glycyl-[protein] + tetradecanoyl-CoA = N-tetradecanoylglycyl-[protein] + CoA + H(+). Adds a myristoyl group to the N-terminal glycine residue of certain cellular proteins. The chain is Glycylpeptide N-tetradecanoyltransferase from Ajellomyces capsulatus (Darling's disease fungus).